The primary structure comprises 346 residues: Threonylcarbamoyl-AMP synthase (346 aa).

The region spanning 18-205 is the YrdC-like domain; the sequence is DPQIAQAAAL…IPVLLRPGGI (188 aa). Residue T40 participates in L-threonine binding. R63 and N67 together coordinate ATP. H72 is a binding site for L-threonine. T123 contacts ATP. L-threonine-binding residues include R127 and A147. The ATP site is built by S149 and S157. S187 contacts L-threonine. Residues R201 and Y240 each coordinate ATP.

Belongs to the SUA5 family.

It is found in the cytoplasm. It catalyses the reaction L-threonine + hydrogencarbonate + ATP = L-threonylcarbamoyladenylate + diphosphate + H2O. Functionally, required for the formation of a threonylcarbamoyl group on adenosine at position 37 (t(6)A37) in tRNAs that read codons beginning with adenine. Catalyzes the conversion of L-threonine, HCO(3)(-)/CO(2) and ATP to give threonylcarbamoyl-AMP (TC-AMP) as the acyladenylate intermediate, with the release of diphosphate. Is also able to catalyze the reverse reaction in vitro, i.e. the formation of ATP from TC-AMP and PPi. This Bacillus subtilis (strain 168) protein is Threonylcarbamoyl-AMP synthase (ywlC).